The primary structure comprises 228 residues: Ion-translocating oxidoreductase complex subunit E (228 aa).

A run of 5 helical transmembrane segments spans residues 18 to 38, 69 to 89, 92 to 112, 125 to 145, and 182 to 202; these read ALVQ…ATNA, IPIY…LINA, FGLY…CIVV, LLSA…MFVL, and PFLL…MLAV.

The protein belongs to the NqrDE/RnfAE family. As to quaternary structure, the complex is composed of six subunits: RnfA, RnfB, RnfC, RnfD, RnfE and RnfG.

It localises to the cell inner membrane. Its function is as follows. Part of a membrane-bound complex that couples electron transfer with translocation of ions across the membrane. This is Ion-translocating oxidoreductase complex subunit E from Cronobacter sakazakii (strain ATCC BAA-894) (Enterobacter sakazakii).